We begin with the raw amino-acid sequence, 524 residues long: Peptide chain release factor 3 (524 aa).

Residues 8-276 (NKRRTFAIIS…GFAKYAPAPE (269 aa)) form the tr-type G domain. Residues 17–24 (SHPDAGKT), 85–89 (DTPGH), and 139–142 (NKLD) contribute to the GTP site.

It belongs to the TRAFAC class translation factor GTPase superfamily. Classic translation factor GTPase family. PrfC subfamily.

The protein resides in the cytoplasm. Functionally, increases the formation of ribosomal termination complexes and stimulates activities of RF-1 and RF-2. It binds guanine nucleotides and has strong preference for UGA stop codons. It may interact directly with the ribosome. The stimulation of RF-1 and RF-2 is significantly reduced by GTP and GDP, but not by GMP. In Hydrogenovibrio crunogenus (strain DSM 25203 / XCL-2) (Thiomicrospira crunogena), this protein is Peptide chain release factor 3.